The chain runs to 780 residues: MAKRTFSNLETFLIFLLVMMSAITVALLSLLFITSGTIENHKDLGGHFFSTTQSPPATQGSTAAQRSTATQHSTATQSSTATQTSPVPLTPESPLFQNFSGYHIGVGRADCTGQVADINLMGYGKSGQNAQGILTRLYSRAFIMAEPDGSNRTVFVSIDIGMVSQRLRLEVLNRLQSKYGSLYRRDNVILSGTHTHSGPAGYFQYTVFVIASEGFSNQTFQHMVTGILKSIDIAHTNMKPGKIFINKGNVDGVQINRSPYSYLQNPQSERARYSSNTDKEMIVLKMVDLNGDDLGLISWFAIHPVSMNNSNHLVNSDNVGYASYLLEQEKNKGYLPGQGPFVAAFASSNLGDVSPNILGPRCINTGESCDNANSTCPIGGPSMCIAKGPGQDMFDSTQIIGRAMYQRAKELYASASQEVTGPLASAHQWVDMTDVTVWLNSTHASKTCKPALGYSFAAGTIDGVGGLNFTQGKTEGDPFWDTIRDQILGKPSEEIKECHKPKPILLHTGELSKPHPWHPDIVDVQIITLGSLAITAIPGEFTTMSGRRLREAVQAEFASHGMQNMTVVISGLCNVYTHYITTYEEYQAQRYEAASTIYGPHTLSAYIQLFRNLAKAIATDTVANLSRGPEPPFFKQLIVPLIPSIVDRAPKGRTFGDVLQPAKPEYRVGEVAEVIFVGANPKNSVQNQTHQTFLTVEKYEATSTSWQIVCNDASWETRFYWHKGLLGLSNATVEWHIPDTAQPGIYRIRYFGHNRKQDILKPAVILSFEGTSPAFEVVTI.

Over 1-12 the chain is Cytoplasmic; sequence MAKRTFSNLETF. A helical; Signal-anchor for type II membrane protein transmembrane segment spans residues 13-33; sequence LIFLLVMMSAITVALLSLLFI. The Lumenal portion of the chain corresponds to 34 to 780; that stretch reads TSGTIENHKD…TSPAFEVVTI (747 aa). Residues 47–90 form a disordered region; it reads HFFSTTQSPPATQGSTAAQRSTATQHSTATQSSTATQTSPVPLT. Low complexity predominate over residues 57 to 85; that stretch reads ATQGSTAAQRSTATQHSTATQSSTATQTS. Residue threonine 62 is glycosylated (O-linked (GalNAc...) threonine). O-linked (GalNAc...) serine glycosylation occurs at serine 67. 2 O-linked (GalNAc...) threonine glycosylation sites follow: threonine 68 and threonine 70. Serine 73 is a glycosylation site (O-linked (GalNAc...) serine). O-linked (GalNAc...) threonine glycans are attached at residues threonine 74 and threonine 76. 2 O-linked (GalNAc...) serine glycosylation sites follow: serine 78 and serine 79. Residues threonine 80, threonine 82, and threonine 84 are each glycosylated (O-linked (GalNAc...) threonine). Residue asparagine 98 is glycosylated (N-linked (GlcNAc...) asparagine). Residue leucine 134 coordinates Ca(2+). Asparagine 151 carries N-linked (GlcNAc...) asparagine glycosylation. Position 194 (histidine 194) interacts with Zn(2+). Residue asparagine 217 is glycosylated (N-linked (GlcNAc...) asparagine). A Zn(2+)-binding site is contributed by histidine 303. Residue asparagine 308 is glycosylated (N-linked (GlcNAc...) asparagine). Serine 354 functions as the Nucleophile in the catalytic mechanism. Cystine bridges form between cysteine 362–cysteine 376 and cysteine 369–cysteine 384. 2 N-linked (GlcNAc...) asparagine glycosylation sites follow: asparagine 440 and asparagine 468. Cysteine 448 and cysteine 498 are oxidised to a cystine. Glutamate 540 provides a ligand contact to Zn(2+). An N-linked (GlcNAc...) asparagine glycan is attached at asparagine 564. A Zn(2+)-binding site is contributed by tyrosine 579. Ca(2+)-binding residues include aspartate 712, serine 714, and threonine 717. An N-linked (GlcNAc...) asparagine glycan is attached at asparagine 730. The tract at residues 770 to 780 is required for correct folding and localization; that stretch reads GTSPAFEVVTI. Threonine 779 is a glycosylation site (O-linked (GalNAc...) threonine).

It belongs to the neutral ceramidase family. Requires Zn(2+) as cofactor. Proteolytic cleavage of the N-terminus removes the signal-anchor and produces a soluble form of the protein. In terms of processing, N-glycosylated. Required for enzyme activity. Post-translationally, O-glycosylated. Required to retain it as a type II membrane protein at the cell surface. Phosphorylated. May prevent ubiquitination and subsequent degradation. In terms of processing, ubiquitinated, leading to its degradation by the proteasome. Ubiquitination is triggered by nitric oxide. As to expression, primarily expressed in intestine. Ubiquitously expressed with higher levels in kidney, skeletal muscle and heart. The ubiquitous expression observed for ASAH2 might be an experimental artifact due to the paralog ASAH2B.

The protein localises to the cell membrane. Its subcellular location is the membrane raft. It localises to the membrane. It is found in the caveola. The protein resides in the golgi apparatus membrane. The protein localises to the mitochondrion. Its subcellular location is the secreted. It localises to the extracellular exosome. It catalyses the reaction an N-acylsphing-4-enine + H2O = sphing-4-enine + a fatty acid. The catalysed reaction is N-dodecanoylsphing-4-enine + H2O = dodecanoate + sphing-4-enine. The enzyme catalyses N-hexadecanoylsphing-4-enine + H2O = sphing-4-enine + hexadecanoate. It carries out the reaction N-octanoylsphing-4-enine + H2O = octanoate + sphing-4-enine. It catalyses the reaction N-(hexanoyl)sphing-4-enine + H2O = hexanoate + sphing-4-enine. The catalysed reaction is N-octadecanoylsphing-4-enine + H2O = sphing-4-enine + octadecanoate. The enzyme catalyses N-tetradecanoylsphing-4-enine + H2O = tetradecanoate + sphing-4-enine. It carries out the reaction N-(9Z-octadecenoyl)-sphing-4-enine + H2O = sphing-4-enine + (9Z)-octadecenoate. It catalyses the reaction N-(15Z-tetracosenoyl)-sphing-4-enine + H2O = (15Z)-tetracosenoate + sphing-4-enine. The catalysed reaction is sphinganine + hexadecanoate = N-hexadecanoylsphinganine + H2O. The enzyme catalyses N-(octadecanoyl)-sphinganine + H2O = sphinganine + octadecanoate. The protein operates within lipid metabolism; sphingolipid metabolism. With respect to regulation, inhibited by dithiothreitol (DTT) and 2-mercaptoethanol. Activity is mildly stimulated by Ca(2+) and Mg(2+), but is not inhibited by EDTA. Activity is inhibited by millimolar levels of Fe(2+), Zn(2+) and Cu(2+). Inhibited by cholesterol. Plasma membrane ceramidase that hydrolyzes sphingolipid ceramides into sphingosine and free fatty acids at neutral pH. Ceramides, sphingosine, and its phosphorylated form sphingosine-1-phosphate are bioactive lipids that mediate cellular signaling pathways regulating several biological processes including cell proliferation, apoptosis and differentiation. Also catalyzes the reverse reaction allowing the synthesis of ceramides from fatty acids and sphingosine. Together with sphingomyelinase, participates in the production of sphingosine and sphingosine-1-phosphate from the degradation of sphingomyelin, a sphingolipid enriched in the plasma membrane of cells. Also participates in the hydrolysis of ceramides from the extracellular milieu allowing the production of sphingosine-1-phosphate inside and outside cells. This is the case for instance with the digestion of dietary sphingolipids in the intestinal tract. The protein is Neutral ceramidase (ASAH2) of Homo sapiens (Human).